The following is a 105-amino-acid chain: Met repressor (105 aa).

The protein belongs to the MetJ family. In terms of assembly, homodimer.

It is found in the cytoplasm. This regulatory protein, when combined with SAM (S-adenosylmethionine) represses the expression of the methionine regulon and of enzymes involved in SAM synthesis. The chain is Met repressor from Serratia proteamaculans (strain 568).